We begin with the raw amino-acid sequence, 211 residues long: Small ribosomal subunit protein uS4 (211 aa).

The interval Gly27–Arg48 is disordered. In terms of domain architecture, S4 RNA-binding spans Arg99–Glu162.

Belongs to the universal ribosomal protein uS4 family. Part of the 30S ribosomal subunit. Contacts protein S5. The interaction surface between S4 and S5 is involved in control of translational fidelity.

Its function is as follows. One of the primary rRNA binding proteins, it binds directly to 16S rRNA where it nucleates assembly of the body of the 30S subunit. In terms of biological role, with S5 and S12 plays an important role in translational accuracy. This is Small ribosomal subunit protein uS4 from Herpetosiphon aurantiacus (strain ATCC 23779 / DSM 785 / 114-95).